We begin with the raw amino-acid sequence, 139 residues long: DNA-directed RNA polymerase II subunit Rpb4 (139 aa).

Belongs to the eukaryotic RPB4 RNA polymerase subunit family. RNA polymerase II consists of 12 different subunits.

The protein localises to the nucleus. It localises to the chromosome. Its function is as follows. DNA-dependent RNA polymerase catalyzes the transcription of DNA into RNA using the four ribonucleoside triphosphates as substrates. Associates with POLR2G. The polypeptide is DNA-directed RNA polymerase II subunit Rpb4 (Drosophila melanogaster (Fruit fly)).